The chain runs to 107 residues: Ferredoxin-1 (107 aa).

4Fe-4S ferredoxin-type domains are found at residues 2–30 and 31–60; these read AFVV…YEGP and NFLV…SEDE. 2 residues coordinate [3Fe-4S] cluster: Cys-9 and Cys-17. Residues Cys-21, Cys-40, Cys-43, and Cys-46 each contribute to the [4Fe-4S] cluster site. Residue Cys-50 participates in [3Fe-4S] cluster binding. Residues 84–107 are disordered; the sequence is EKKDPLPDAEDWDGVKGKLQHLER. The span at 96–107 shows a compositional bias: basic and acidic residues; that stretch reads DGVKGKLQHLER.

Requires [4Fe-4S] cluster as cofactor. It depends on [3Fe-4S] cluster as a cofactor.

In terms of biological role, ferredoxins are iron-sulfur proteins that transfer electrons in a wide variety of metabolic reactions. This ferredoxin could play a role in regulating gene expression by interacting directly with DNA. This chain is Ferredoxin-1 (fdxA), found in Azotobacter vinelandii.